The chain runs to 523 residues: UDP-glucuronosyltransferase 3A1 (523 aa).

An N-terminal signal peptide occupies residues 1–22 (MAGQQALLLFGFILPGLLFSEA). The Extracellular segment spans residues 23–483 (AKILTVSLVG…HAFQQPWYEQ (461 aa)). An N-linked (GlcNAc...) asparagine glycan is attached at Asn-52. Residues 484–504 (YLLDVFLFLLVVTLGTMWLCG) form a helical membrane-spanning segment. At 505–523 (KLLGLVARWLCGARKLKKA) the chain is on the cytoplasmic side.

It belongs to the UDP-glycosyltransferase family.

Its subcellular location is the membrane. The enzyme catalyses glucuronate acceptor + UDP-alpha-D-glucuronate = acceptor beta-D-glucuronoside + UDP + H(+). In terms of biological role, UDP-glucuronosyltransferases catalyze phase II biotransformation reactions in which lipophilic substrates are conjugated with glucuronic acid to increase water solubility and enhance excretion. They are of major importance in the conjugation and subsequent elimination of potentially toxic xenobiotics and endogenous compounds. The sequence is that of UDP-glucuronosyltransferase 3A1 (UGT3A1) from Bos taurus (Bovine).